The sequence spans 364 residues: Sorbitol dehydrogenase (364 aa).

Residue Cys54 participates in Zn(2+) binding. Tyr60 lines the substrate pocket. Zn(2+) is bound by residues His79 and Glu80. Glu165 lines the substrate pocket. Residues Ile193, Asp213, Arg218, 284-286 (VGM), and 308-310 (VFR) contribute to the NAD(+) site. Substrate is bound by residues Arg310 and Tyr311.

This sequence belongs to the zinc-containing alcohol dehydrogenase family. In terms of assembly, homotetramer. Requires Zn(2+) as cofactor. Mostly expressed in dry seeds and leaves, and, to a lower extent, in roots, stems, flowers and siliques (at protein level).

The protein resides in the mitochondrion membrane. It is found in the cell membrane. Its subcellular location is the cytoplasm. It localises to the cytosol. It carries out the reaction keto-D-fructose + NADH + H(+) = D-sorbitol + NAD(+). The enzyme catalyses ribitol + NAD(+) = D-ribulose + NADH + H(+). It catalyses the reaction xylitol + NAD(+) = D-xylulose + NADH + H(+). Functionally, polyol dehydrogenase that catalyzes the NAD(+)-dependent oxidation of various sugar alcohols. Is mostly active with D-sorbitol (D-glucitol), ribitol and xylitol as substrates, leading to the C2-oxidized products D-fructose, D-ribulose and D-xylulose, respectively. To a lesser extent, can also oxidize arabitol, mannitol, lactitol and maltitol in vitro. Is required for sorbitol metabolism. Cannot use NADP(+) as the electron acceptor. This is Sorbitol dehydrogenase (SDH) from Arabidopsis thaliana (Mouse-ear cress).